A 223-amino-acid polypeptide reads, in one-letter code: Deoxyribose-phosphate aldolase (223 aa).

Catalysis depends on aspartate 92, which acts as the Proton donor/acceptor. Lysine 154 serves as the catalytic Schiff-base intermediate with acetaldehyde. Lysine 182 functions as the Proton donor/acceptor in the catalytic mechanism.

The protein belongs to the DeoC/FbaB aldolase family. DeoC type 1 subfamily.

Its subcellular location is the cytoplasm. It catalyses the reaction 2-deoxy-D-ribose 5-phosphate = D-glyceraldehyde 3-phosphate + acetaldehyde. Its pathway is carbohydrate degradation; 2-deoxy-D-ribose 1-phosphate degradation; D-glyceraldehyde 3-phosphate and acetaldehyde from 2-deoxy-alpha-D-ribose 1-phosphate: step 2/2. In terms of biological role, catalyzes a reversible aldol reaction between acetaldehyde and D-glyceraldehyde 3-phosphate to generate 2-deoxy-D-ribose 5-phosphate. This is Deoxyribose-phosphate aldolase from Haemophilus influenzae (strain ATCC 51907 / DSM 11121 / KW20 / Rd).